A 203-amino-acid chain; its full sequence is Cytochrome c oxidase assembly protein CtaG (203 aa).

Over 1-19 (MDAGKAERRAGNGRRTDGR) the chain is Cytoplasmic. Residues 20 to 42 (RHLVVAAACAAFIAAMVGVTYAS) form a helical; Signal-anchor for type II membrane protein membrane-spanning segment. The Periplasmic segment spans residues 43-203 (VPLYAMFCAL…AAARASGTGG (161 aa)).

This sequence belongs to the COX11/CtaG family.

Its subcellular location is the cell inner membrane. Functionally, exerts its effect at some terminal stage of cytochrome c oxidase synthesis, probably by being involved in the insertion of the copper B into subunit I. This Xanthobacter autotrophicus (strain ATCC BAA-1158 / Py2) protein is Cytochrome c oxidase assembly protein CtaG.